Consider the following 509-residue polypeptide: Aspartyl/glutamyl-tRNA(Asn/Gln) amidotransferase subunit B (509 aa).

It belongs to the GatB/GatE family. GatB subfamily. As to quaternary structure, heterotrimer of A, B and C subunits.

The enzyme catalyses L-glutamyl-tRNA(Gln) + L-glutamine + ATP + H2O = L-glutaminyl-tRNA(Gln) + L-glutamate + ADP + phosphate + H(+). It carries out the reaction L-aspartyl-tRNA(Asn) + L-glutamine + ATP + H2O = L-asparaginyl-tRNA(Asn) + L-glutamate + ADP + phosphate + 2 H(+). Allows the formation of correctly charged Asn-tRNA(Asn) or Gln-tRNA(Gln) through the transamidation of misacylated Asp-tRNA(Asn) or Glu-tRNA(Gln) in organisms which lack either or both of asparaginyl-tRNA or glutaminyl-tRNA synthetases. The reaction takes place in the presence of glutamine and ATP through an activated phospho-Asp-tRNA(Asn) or phospho-Glu-tRNA(Gln). This chain is Aspartyl/glutamyl-tRNA(Asn/Gln) amidotransferase subunit B, found in Psychrobacter arcticus (strain DSM 17307 / VKM B-2377 / 273-4).